The primary structure comprises 419 residues: UDP-N-acetylglucosamine 1-carboxyvinyltransferase (419 aa).

22-23 (KN) serves as a coordination point for phosphoenolpyruvate. Position 91 (Arg91) interacts with UDP-N-acetyl-alpha-D-glucosamine. Catalysis depends on Cys115, which acts as the Proton donor. Cys115 carries the 2-(S-cysteinyl)pyruvic acid O-phosphothioketal modification. Residues 120–124 (RPVDL), 160–163 (KVSV), Asp305, and Val327 contribute to the UDP-N-acetyl-alpha-D-glucosamine site.

This sequence belongs to the EPSP synthase family. MurA subfamily.

It localises to the cytoplasm. The enzyme catalyses phosphoenolpyruvate + UDP-N-acetyl-alpha-D-glucosamine = UDP-N-acetyl-3-O-(1-carboxyvinyl)-alpha-D-glucosamine + phosphate. It participates in cell wall biogenesis; peptidoglycan biosynthesis. Functionally, cell wall formation. Adds enolpyruvyl to UDP-N-acetylglucosamine. The sequence is that of UDP-N-acetylglucosamine 1-carboxyvinyltransferase from Salmonella agona (strain SL483).